Here is a 322-residue protein sequence, read N- to C-terminus: ATP-dependent 6-phosphofructokinase (322 aa).

ATP contacts are provided by residues Gly-12, 73-74 (RF), and 103-106 (GDGT). Residue Asp-104 coordinates Mg(2+). 126-128 (TID) is a substrate binding site. Asp-128 (proton acceptor) is an active-site residue. Residue Arg-155 coordinates ADP. Residues Arg-163 and 170 to 172 (MGR) each bind substrate. Residues 186–188 (GSE), Lys-212, and 214–216 (KPS) each bind ADP. Residues Glu-223, Arg-245, and 251–254 (HTQR) contribute to the substrate site.

The protein belongs to the phosphofructokinase type A (PFKA) family. ATP-dependent PFK group I subfamily. Prokaryotic clade 'B1' sub-subfamily. Homotetramer. Requires Mg(2+) as cofactor.

The protein resides in the cytoplasm. It catalyses the reaction beta-D-fructose 6-phosphate + ATP = beta-D-fructose 1,6-bisphosphate + ADP + H(+). Its pathway is carbohydrate degradation; glycolysis; D-glyceraldehyde 3-phosphate and glycerone phosphate from D-glucose: step 3/4. With respect to regulation, allosterically activated by ADP and other diphosphonucleosides, and allosterically inhibited by phosphoenolpyruvate. Functionally, catalyzes the phosphorylation of D-fructose 6-phosphate to fructose 1,6-bisphosphate by ATP, the first committing step of glycolysis. The chain is ATP-dependent 6-phosphofructokinase from Mesomycoplasma hyopneumoniae (strain 232) (Mycoplasma hyopneumoniae).